The following is a 326-amino-acid chain: Cytosolic sulfotransferase 12 (326 aa).

75–80 (KSGTTW) is a binding site for 3'-phosphoadenylyl sulfate. Catalysis depends on His-140, which acts as the Proton acceptor. 3'-phosphoadenylyl sulfate contacts are provided by residues Arg-162, Ser-170, Tyr-228, and 290–292 (RKG).

The protein belongs to the sulfotransferase 1 family. Dimer. Expressed in the aerial parts of seedlings, in roots, leaves and flowers. Not detected in stems and siliques.

Its subcellular location is the cytoplasm. Its function is as follows. Sulfotransferase that utilizes 3'-phospho-5'-adenylyl sulfate (PAPS) as sulfonate donor to catalyze the stereospecific sulfate conjugation of 24-epibrassinosteroids. Preferred substrates are 24-epicathasterone and 6-deoxo-24-epicathasterone. Low activity with 22-deoxy-24-epiteasterone. No activity with 24-epimers catasterone and brassinolide. Sulfonates salicylic acid. May be involved in detoxification. Enhances plant response to pathogen infection and contributes to long distance signaling in systemic acquired resistance (SAR). This chain is Cytosolic sulfotransferase 12 (SOT12), found in Arabidopsis thaliana (Mouse-ear cress).